The primary structure comprises 200 residues: Glycerol-3-phosphate acyltransferase (200 aa).

5 helical membrane-spanning segments follow: residues 2–22 (IHLL…AVIV), 51–71 (TAAI…VVAA), 84–104 (IVLL…FFGF), 113–133 (ALGI…ATWV), and 143–163 (SLSA…LLGW).

The protein belongs to the PlsY family. In terms of assembly, probably interacts with PlsX.

Its subcellular location is the cell inner membrane. The enzyme catalyses an acyl phosphate + sn-glycerol 3-phosphate = a 1-acyl-sn-glycero-3-phosphate + phosphate. It participates in lipid metabolism; phospholipid metabolism. In terms of biological role, catalyzes the transfer of an acyl group from acyl-phosphate (acyl-PO(4)) to glycerol-3-phosphate (G3P) to form lysophosphatidic acid (LPA). This enzyme utilizes acyl-phosphate as fatty acyl donor, but not acyl-CoA or acyl-ACP. The chain is Glycerol-3-phosphate acyltransferase from Thiobacillus denitrificans (strain ATCC 25259 / T1).